A 359-amino-acid polypeptide reads, in one-letter code: 5-amino-6-(D-ribitylamino)uracil--L-tyrosine 4-hydroxyphenyl transferase (359 aa).

The region spanning 45 to 282 (VTYVVNANIN…TYAVSRIFFK (238 aa)) is the Radical SAM core domain. Residues C59, C63, and C66 each coordinate [4Fe-4S] cluster.

This sequence belongs to the radical SAM superfamily. CofH family. In terms of assembly, consists of two subunits, CofG and CofH. [4Fe-4S] cluster serves as cofactor.

It catalyses the reaction 5-amino-6-(D-ribitylamino)uracil + L-tyrosine + S-adenosyl-L-methionine = 5-amino-5-(4-hydroxybenzyl)-6-(D-ribitylimino)-5,6-dihydrouracil + 2-iminoacetate + 5'-deoxyadenosine + L-methionine + H(+). Its pathway is cofactor biosynthesis; coenzyme F0 biosynthesis. In terms of biological role, catalyzes the radical-mediated synthesis of 5-amino-5-(4-hydroxybenzyl)-6-(D-ribitylimino)-5,6-dihydrouracil from 5-amino-6-(D-ribitylamino)uracil and L-tyrosine. The protein is 5-amino-6-(D-ribitylamino)uracil--L-tyrosine 4-hydroxyphenyl transferase of Methanococcus maripaludis (strain C6 / ATCC BAA-1332).